The following is a 514-amino-acid chain: Chromosomal replication initiator protein DnaA (514 aa).

The tract at residues 1 to 90 (MSVELWQQCV…KRSRTPRAAI (90 aa)) is domain I, interacts with DnaA modulators. The domain II stretch occupies residues 91 to 177 (VPSQTHVAPP…QVEGALKHTS (87 aa)). Residues 178-394 (YLNRTFTFEN…GALKRVIAHS (217 aa)) form a domain III, AAA+ region region. Residues Gly-222, Gly-224, Lys-225, and Thr-226 each contribute to the ATP site. The tract at residues 395 to 514 (HFMGRPITIE…YKNLLRTLTT (120 aa)) is domain IV, binds dsDNA.

It belongs to the DnaA family. As to quaternary structure, oligomerizes as a right-handed, spiral filament on DNA at oriC.

Its subcellular location is the cytoplasm. In terms of biological role, plays an essential role in the initiation and regulation of chromosomal replication. ATP-DnaA binds to the origin of replication (oriC) to initiate formation of the DNA replication initiation complex once per cell cycle. Binds the DnaA box (a 9 base pair repeat at the origin) and separates the double-stranded (ds)DNA. Forms a right-handed helical filament on oriC DNA; dsDNA binds to the exterior of the filament while single-stranded (ss)DNA is stabiized in the filament's interior. The ATP-DnaA-oriC complex binds and stabilizes one strand of the AT-rich DNA unwinding element (DUE), permitting loading of DNA polymerase. After initiation quickly degrades to an ADP-DnaA complex that is not apt for DNA replication. Binds acidic phospholipids. This Pseudomonas aeruginosa (strain LESB58) protein is Chromosomal replication initiator protein DnaA.